The sequence spans 233 residues: Small ribosomal subunit protein uS3 (233 aa).

The KH type-2 domain maps to 39 to 107 (VRQFLMKTLE…PVQINISEVR (69 aa)).

This sequence belongs to the universal ribosomal protein uS3 family. As to quaternary structure, part of the 30S ribosomal subunit. Forms a tight complex with proteins S10 and S14.

In terms of biological role, binds the lower part of the 30S subunit head. Binds mRNA in the 70S ribosome, positioning it for translation. This Buchnera aphidicola subsp. Acyrthosiphon pisum (strain 5A) protein is Small ribosomal subunit protein uS3.